An 841-amino-acid chain; its full sequence is pre-rRNA 2'-O-ribose RNA methyltransferase FTSJ3 (841 aa).

5 residues coordinate S-adenosyl-L-methionine: G56, W58, D76, D92, and D117. The active-site Proton acceptor is the K157. Residues 332–366 (ISLSSGEEDEGNEEDSTAGTTEQPSKEEEEEEQLN) form a disordered region. 5 positions are modified to phosphoserine: S333, S335, S336, S347, and S356. A compositionally biased stretch (acidic residues) spans 337-347 (GEEDEGNEEDS). A coiled-coil region spans residues 356–404 (SKEEEEEEQLNQTLAEMKAQEVAELKRKKKKLLREQRKQRERVELKMDL). A Glycyl lysine isopeptide (Lys-Gly) (interchain with G-Cter in SUMO2) cross-link involves residue K357. R389 carries the post-translational modification Citrulline. Residues 454–482 (VSDVEDDGDDTSLDSDLDPEELAGVRGHQ) form a disordered region. Positions 456 to 474 (DVEDDGDDTSLDSDLDPEE) are enriched in acidic residues. A Phosphoserine modification is found at S547. Residue T567 is modified to Phosphothreonine. A Glycyl lysine isopeptide (Lys-Gly) (interchain with G-Cter in SUMO2) cross-link involves residue K573. A Phosphoserine modification is found at S578. Residues 579-654 (PLYQDEAPKG…IVPIEDPAKH (76 aa)) are disordered. Residue K637 forms a Glycyl lysine isopeptide (Lys-Gly) (interchain with G-Cter in SUMO2) linkage. Phosphoserine is present on S638. K653 is covalently cross-linked (Glycyl lysine isopeptide (Lys-Gly) (interchain with G-Cter in SUMO2)). S670 carries the phosphoserine modification. K672 is covalently cross-linked (Glycyl lysine isopeptide (Lys-Gly) (interchain with G-Cter in SUMO2)). S682 is subject to Phosphoserine. Residue K704 forms a Glycyl lysine isopeptide (Lys-Gly) (interchain with G-Cter in SUMO2) linkage. The stretch at 733–771 (IKKVAEAKARKKRRMLKRLEQTRKKAEAVVNTVDISERE) forms a coiled coil. Position 777 is a citrulline (R777). A compositionally biased stretch (basic residues) spans 805-815 (VRRPAGVRGHF). The tract at residues 805–841 (VRRPAGVRGHFKVVDSRMKKDQRAQQRKEQKKKHKRK) is disordered. Residues 816-832 (KVVDSRMKKDQRAQQRK) show a composition bias toward basic and acidic residues.

Belongs to the class I-like SAM-binding methyltransferase superfamily. RNA methyltransferase RlmE family. SPB1 subfamily. Interacts with NIP7. Citrullinated by PADI4.

Its subcellular location is the nucleus. The protein resides in the nucleolus. It carries out the reaction a ribonucleotide in rRNA + S-adenosyl-L-methionine = a 2'-O-methylribonucleotide in rRNA + S-adenosyl-L-homocysteine + H(+). Functionally, RNA 2'-O-methyltransferase involved in the processing of the 34S pre-rRNA to 18S rRNA and in 40S ribosomal subunit formation. The sequence is that of pre-rRNA 2'-O-ribose RNA methyltransferase FTSJ3 from Pongo abelii (Sumatran orangutan).